Reading from the N-terminus, the 141-residue chain is Nucleoside diphosphate kinase (141 aa).

Lys-11, Phe-59, Arg-87, Thr-93, Arg-104, and Asn-114 together coordinate ATP. His-117 (pros-phosphohistidine intermediate) is an active-site residue.

It belongs to the NDK family. In terms of assembly, homotetramer. Requires Mg(2+) as cofactor.

It localises to the cytoplasm. The catalysed reaction is a 2'-deoxyribonucleoside 5'-diphosphate + ATP = a 2'-deoxyribonucleoside 5'-triphosphate + ADP. The enzyme catalyses a ribonucleoside 5'-diphosphate + ATP = a ribonucleoside 5'-triphosphate + ADP. Its function is as follows. Major role in the synthesis of nucleoside triphosphates other than ATP. The ATP gamma phosphate is transferred to the NDP beta phosphate via a ping-pong mechanism, using a phosphorylated active-site intermediate. In Pseudomonas fluorescens (strain Pf0-1), this protein is Nucleoside diphosphate kinase.